A 321-amino-acid chain; its full sequence is Putative membrane-bound redox modulator Alx (321 aa).

Over 1-6 (MNTVGT) the chain is Periplasmic. A helical membrane pass occupies residues 7–27 (PLLWGGFAVVVAIMLAIDLLL). Residues 28–43 (QGRRGAHAMTMKQAAA) are Cytoplasmic-facing. Residues 44-64 (WSLVWVTLSLLFNAAFWWYLV) form a helical membrane-spanning segment. Residues 65–89 (QTEGRAVADPQALAFLTGYLIEKSL) lie on the Periplasmic side of the membrane. The chain crosses the membrane as a helical span at residues 90–110 (AVDNVFVWLMLFSYFSVPAAL). Residues 111-113 (QRR) lie on the Cytoplasmic side of the membrane. The helical transmembrane segment at 114 to 134 (VLVYGVLGAIVLRTIMIFTGS) threads the bilayer. A topological domain (periplasmic) is located at residue tryptophan 135. The helical transmembrane segment at 136–156 (LISQFDWILYIFGAFLLFTGV) threads the bilayer. Residues 157–198 (KMALAHEDESGIGDKPLVRWLRGHLRMTDTIDNEHFFVRKNG) lie on the Cytoplasmic side of the membrane. A helical transmembrane segment spans residues 199 to 219 (LLYATPLMLVLILVELSDVIF). Residues 220–225 (AVDSIP) are Periplasmic-facing. Residues 226–246 (AIFAVTTDPFIVLTSNLFAIL) traverse the membrane as a helical segment. The Cytoplasmic segment spans residues 247–261 (GLRAMYFLLAGVAER). A helical transmembrane segment spans residues 262–282 (FSMLKYGLAVILVFIGIKMLI). The Periplasmic segment spans residues 283–286 (VDFY). Residues 287–307 (HIPIAVSLGVVFGILVMTFII) form a helical membrane-spanning segment. At 308–321 (NAWVNYRHDKQRVG) the chain is on the cytoplasmic side.

This sequence belongs to the TerC family.

The protein resides in the cell inner membrane. Its function is as follows. Has been proposed to be a redox modulator. The polypeptide is Putative membrane-bound redox modulator Alx (alx) (Escherichia coli O157:H7).